The primary structure comprises 296 residues: MTADAYLIDKARVRRSFDRAAGTYDAAALLQREVRERMLERLDLVKLAPQAVLDAGCGTGHASAALSARYRQSQVISLDIAMGMLKKTMAARSLVQRLFGFDRRHAVCADIERLPLAAASIDLVWSNMAIQWCNDLDQAFGEIQRVLKPEGLLMFSTLGPDTLKELRAATRQDNTHVTVSRFIDMHDIGDALVRAGFNAPVLDVEYFELTYDDVMGVMRDLKAIGAHNAAEGRHRGLQGRGFLQQVQARYESFRRDGKLPATYEVIYGHAWKPQARVALPDGLSPVQFRPRASSST.

It belongs to the methyltransferase superfamily.

It carries out the reaction malonyl-[ACP] + S-adenosyl-L-methionine = malonyl-[ACP] methyl ester + S-adenosyl-L-homocysteine. It participates in cofactor biosynthesis; biotin biosynthesis. Functionally, converts the free carboxyl group of a malonyl-thioester to its methyl ester by transfer of a methyl group from S-adenosyl-L-methionine (SAM). It allows to synthesize pimeloyl-ACP via the fatty acid synthetic pathway. The polypeptide is Malonyl-[acyl-carrier protein] O-methyltransferase (Methylovorus sp. (strain MP688)).